Consider the following 133-residue polypeptide: Fluoride-specific ion channel FluC (133 aa).

A run of 4 helical transmembrane segments spans residues 4-24 (LLWIALGGSLGALCRYGLSVL), 35-55 (WGTLAANLVGCFLIGGLWVLA), 66-86 (VFIFTGGIGSLTTFSTYSLES), and 107-127 (VLGLVLVAIGAGCALFLLGGP). The Na(+) site is built by glycine 74 and threonine 77.

This sequence belongs to the fluoride channel Fluc/FEX (TC 1.A.43) family.

The protein resides in the cell inner membrane. It catalyses the reaction fluoride(in) = fluoride(out). Na(+) is not transported, but it plays an essential structural role and its presence is essential for fluoride channel function. In terms of biological role, fluoride-specific ion channel. Important for reducing fluoride concentration in the cell, thus reducing its toxicity. The protein is Fluoride-specific ion channel FluC of Salinibacter ruber (strain DSM 13855 / M31).